Here is a 967-residue protein sequence, read N- to C-terminus: E3 ubiquitin-protein ligase arkadia-C (967 aa).

2 disordered regions span residues 57-175 (QQID…VSSL) and 193-276 (RKRF…SGGM). The segment covering 112 to 131 (SSFSDCISSPSSSSHFGDSD) has biased composition (low complexity). Polar residues predominate over residues 149 to 160 (GINSTPRTQSAR). Low complexity predominate over residues 232–251 (SSSSSSENDLSSESSSSSST). Positions 280–284 (VVVIE) match the SUMO interaction motif 1 (SIM) motif. The SUMO interaction motif 2 (SIM) motif lies at 305–311 (EVEIVTV). Positions 321–343 (LGHPRSHWGQNSQSGRTQEHRTR) are disordered. The SUMO interaction motif 3 (SIM) motif lies at 360–364 (VVDLT). Disordered regions lie at residues 368-452 (DDPT…MPRL), 482-548 (HSHH…LSNN), 629-657 (LHHQ…MDYV), and 669-689 (PSLT…LSTA). The segment covering 385-395 (VSTVSSNTSTS) has biased composition (low complexity). Over residues 482–498 (HSHHFPHHHHHHHHHSS) the composition is skewed to basic residues. Over residues 629-642 (LHHQTSACPHSNPA) the composition is skewed to polar residues. Positions 643-654 (SQPPPPPPPPPM) are enriched in pro residues. The interval 880–882 (YPH) is ubiquitin binding. Zn(2+) contacts are provided by Cys-915 and Cys-918. The RING-type; atypical zinc finger occupies 915–956 (CTICLSILEEGEDVRRLPCMHLFHQVCVDQWLITNKKCPICR). The interval 930 to 934 (RLPCM) is ubiquitin binding. Zn(2+) is bound by residues His-938 and Cys-941.

Belongs to the Arkadia family. As to quaternary structure, monomer.

It localises to the nucleus. Its subcellular location is the cytoplasm. The protein resides in the PML body. The catalysed reaction is S-ubiquitinyl-[E2 ubiquitin-conjugating enzyme]-L-cysteine + [acceptor protein]-L-lysine = [E2 ubiquitin-conjugating enzyme]-L-cysteine + N(6)-ubiquitinyl-[acceptor protein]-L-lysine.. It functions in the pathway protein modification; protein ubiquitination. With respect to regulation, binds free ubiquitin non-covalently via its RING-type zinc finger. Ubiquitin-binding leads to enhance the E3 ubiquitin-protein ligase activity by stabilizing the ubiquitin-conjugating enzyme E2 (donor ubiquitin) in the 'closed' conformation and activating ubiquitin transfer. In terms of biological role, E3 ubiquitin-protein ligase required for mesoderm patterning during embryonic development. Acts as an enhancer of the transcriptional responses of the smad2/smad3 effectors, which are activated downstream of BMP. Acts by mediating ubiquitination and degradation of SMAD inhibitors such as smad7, inducing their proteasomal degradation and thereby enhancing the transcriptional activity of TGF-beta and BMP. Specifically binds polysumoylated chains via SUMO interaction motifs (SIMs) and mediates ubiquitination of sumoylated substrates. The regulation of the BMP-SMAD signaling is however independent of sumoylation and is not dependent of SUMO interaction motifs (SIMs). This chain is E3 ubiquitin-protein ligase arkadia-C (rnf111-c), found in Xenopus laevis (African clawed frog).